The sequence spans 87 residues: Phosphoribosyl-ATP pyrophosphatase (87 aa).

Belongs to the PRA-PH family.

It localises to the cytoplasm. It catalyses the reaction 1-(5-phospho-beta-D-ribosyl)-ATP + H2O = 1-(5-phospho-beta-D-ribosyl)-5'-AMP + diphosphate + H(+). It participates in amino-acid biosynthesis; L-histidine biosynthesis; L-histidine from 5-phospho-alpha-D-ribose 1-diphosphate: step 2/9. The chain is Phosphoribosyl-ATP pyrophosphatase from Kocuria rhizophila (strain ATCC 9341 / DSM 348 / NBRC 103217 / DC2201).